A 298-amino-acid chain; its full sequence is tRNA-cytidine(32) 2-sulfurtransferase (298 aa).

Positions 1–26 are disordered; that stretch reads MTAVISLPDPPQRASRGPRVAGPGQD. Residues 57–62 carry the PP-loop motif motif; sequence SGGKDS. The [4Fe-4S] cluster site is built by cysteine 132, cysteine 135, and cysteine 223.

It belongs to the TtcA family. As to quaternary structure, homodimer. Requires Mg(2+) as cofactor. It depends on [4Fe-4S] cluster as a cofactor.

It is found in the cytoplasm. The catalysed reaction is cytidine(32) in tRNA + S-sulfanyl-L-cysteinyl-[cysteine desulfurase] + AH2 + ATP = 2-thiocytidine(32) in tRNA + L-cysteinyl-[cysteine desulfurase] + A + AMP + diphosphate + H(+). Its pathway is tRNA modification. Catalyzes the ATP-dependent 2-thiolation of cytidine in position 32 of tRNA, to form 2-thiocytidine (s(2)C32). The sulfur atoms are provided by the cysteine/cysteine desulfurase (IscS) system. This Stenotrophomonas maltophilia (strain R551-3) protein is tRNA-cytidine(32) 2-sulfurtransferase.